The chain runs to 476 residues: MSTNQLDTKSQAWSALFSEPMSELVKRYTASVFFDKRLWQADIAGSLAHAEMLAAQQIIGAQDLADIQRGMAQITQEIESGAFEWKLELEDVHLNIEARLTQLVGDAGKRLHTGRSRNDQVATDVRLWLRGEIDATAVLLADMQRALVHVASNNVDVILPGFTHLQVAQPVSFAHHLLAYVEMFARDAERLADLRKRVNRLPLGSAALAGTSYPLDRERVARTLGFDGVCQNSLDAVSDRDFAIEFTGFATLVMIHVSRMAEEIVLWMSQNFGFINLSDRYCTGSSIMPQKRNPDVAELARGKSGRVVGHLMGLITLMKGQPLAYNKDNQEDKEPLFDTVDTVKDTLRIMAEMIGGEVAADGSRSGGLTVKAEAMERAALRGYATATDLADYLVKKGLPFRDAHEVVAHAVKDAIALGKDLSELPLETLQGYNATITADVHAALTLAGSLNARNTLGGTAPSQVRAQIERHQARLG.

Belongs to the lyase 1 family. Argininosuccinate lyase subfamily.

It is found in the cytoplasm. The catalysed reaction is 2-(N(omega)-L-arginino)succinate = fumarate + L-arginine. The protein operates within amino-acid biosynthesis; L-arginine biosynthesis; L-arginine from L-ornithine and carbamoyl phosphate: step 3/3. In Leptothrix cholodnii (strain ATCC 51168 / LMG 8142 / SP-6) (Leptothrix discophora (strain SP-6)), this protein is Argininosuccinate lyase.